Reading from the N-terminus, the 210-residue chain is Probable GTP-binding protein EngB (210 aa).

The 175-residue stretch at 30–204 (QGYEVAFAGR…YRVLADWMEL (175 aa)) folds into the EngB-type G domain. Residues 38–45 (GRSNAGKS), 64–68 (GRTQL), 82–85 (DLPG), 149–152 (TKAD), and 182–185 (LFSA) contribute to the GTP site. Positions 45 and 66 each coordinate Mg(2+).

The protein belongs to the TRAFAC class TrmE-Era-EngA-EngB-Septin-like GTPase superfamily. EngB GTPase family. Mg(2+) serves as cofactor.

Its function is as follows. Necessary for normal cell division and for the maintenance of normal septation. The polypeptide is Probable GTP-binding protein EngB (Pseudomonas putida (strain ATCC 47054 / DSM 6125 / CFBP 8728 / NCIMB 11950 / KT2440)).